Here is a 235-residue protein sequence, read N- to C-terminus: tRNA (guanine-N(1)-)-methyltransferase (235 aa).

Residues Gly-114 and 134-139 contribute to the S-adenosyl-L-methionine site; that span reads IGDYIL.

Belongs to the RNA methyltransferase TrmD family. As to quaternary structure, homodimer.

The protein localises to the cytoplasm. The enzyme catalyses guanosine(37) in tRNA + S-adenosyl-L-methionine = N(1)-methylguanosine(37) in tRNA + S-adenosyl-L-homocysteine + H(+). In terms of biological role, specifically methylates guanosine-37 in various tRNAs. In Ehrlichia ruminantium (strain Welgevonden), this protein is tRNA (guanine-N(1)-)-methyltransferase.